The chain runs to 84 residues: ATP synthase subunit c (84 aa).

Transmembrane regions (helical) follow at residues 10–30 (IAVG…FALL) and 53–73 (FIIA…ALLF).

It belongs to the ATPase C chain family. In terms of assembly, F-type ATPases have 2 components, F(1) - the catalytic core - and F(0) - the membrane proton channel. F(1) has five subunits: alpha(3), beta(3), gamma(1), delta(1), epsilon(1). F(0) has three main subunits: a(1), b(2) and c(10-14). The alpha and beta chains form an alternating ring which encloses part of the gamma chain. F(1) is attached to F(0) by a central stalk formed by the gamma and epsilon chains, while a peripheral stalk is formed by the delta and b chains.

The protein resides in the cell inner membrane. Its function is as follows. F(1)F(0) ATP synthase produces ATP from ADP in the presence of a proton or sodium gradient. F-type ATPases consist of two structural domains, F(1) containing the extramembraneous catalytic core and F(0) containing the membrane proton channel, linked together by a central stalk and a peripheral stalk. During catalysis, ATP synthesis in the catalytic domain of F(1) is coupled via a rotary mechanism of the central stalk subunits to proton translocation. In terms of biological role, key component of the F(0) channel; it plays a direct role in translocation across the membrane. A homomeric c-ring of between 10-14 subunits forms the central stalk rotor element with the F(1) delta and epsilon subunits. This is ATP synthase subunit c from Vibrio alginolyticus.